A 366-amino-acid chain; its full sequence is Anthranilate phosphoribosyltransferase (366 aa).

5-phospho-alpha-D-ribose 1-diphosphate-binding positions include Gly79, 82 to 83, Thr87, 89 to 92, 107 to 115, and Ser119; these read GD, NIST, and KHGNRAATS. Anthranilate is bound at residue Gly79. Position 91 (Ser91) interacts with Mg(2+). Position 110 (Asn110) interacts with anthranilate. Arg165 is an anthranilate binding site. The Mg(2+) site is built by Asp223 and Glu224. Positions 342 to 366 are disordered; it reads ESLSGKSMSMRSRTSILSPASGERV. Residues 345–359 are compositionally biased toward polar residues; sequence SGKSMSMRSRTSILS.

The protein belongs to the anthranilate phosphoribosyltransferase family. As to quaternary structure, homodimer. Mg(2+) is required as a cofactor.

It carries out the reaction N-(5-phospho-beta-D-ribosyl)anthranilate + diphosphate = 5-phospho-alpha-D-ribose 1-diphosphate + anthranilate. Its pathway is amino-acid biosynthesis; L-tryptophan biosynthesis; L-tryptophan from chorismate: step 2/5. In terms of biological role, catalyzes the transfer of the phosphoribosyl group of 5-phosphorylribose-1-pyrophosphate (PRPP) to anthranilate to yield N-(5'-phosphoribosyl)-anthranilate (PRA). The polypeptide is Anthranilate phosphoribosyltransferase (Methanosarcina barkeri (strain Fusaro / DSM 804)).